A 724-amino-acid chain; its full sequence is Catalase-peroxidase (724 aa).

The segment at 1–20 is disordered; that stretch reads MDENKTKPAGKCPVMHGGNT. The segment at residues 98–225 is a cross-link (tryptophyl-tyrosyl-methioninium (Trp-Tyr) (with M-251)); sequence WHSAGTYRTA…LAAVQMGLIY (128 aa). Catalysis depends on H99, which acts as the Proton acceptor. The tryptophyl-tyrosyl-methioninium (Tyr-Met) (with W-98) cross-link spans 225 to 251; that stretch reads YVNPEGVDGNPDPLRTAQDMRVTFSRM. H266 lines the heme b pocket.

This sequence belongs to the peroxidase family. Peroxidase/catalase subfamily. As to quaternary structure, homodimer or homotetramer. It depends on heme b as a cofactor. Formation of the three residue Trp-Tyr-Met cross-link is important for the catalase, but not the peroxidase activity of the enzyme.

It carries out the reaction H2O2 + AH2 = A + 2 H2O. The catalysed reaction is 2 H2O2 = O2 + 2 H2O. Its function is as follows. Bifunctional enzyme with both catalase and broad-spectrum peroxidase activity. The sequence is that of Catalase-peroxidase from Pectobacterium carotovorum subsp. carotovorum (strain PC1).